A 403-amino-acid chain; its full sequence is Renin (403 aa).

Residues 1–22 form the signal peptide; it reads MARCRMPRWGLLLVLWGSCTFG. The propeptide at 23–65 is activation peptide; that stretch reads LPADTGAFRRIFLKKMPSIRESLKERGVDVAGLGAEWNQFTKR. N-linked (GlcNAc...) asparagine glycosylation occurs at Asn70. Residues 85-400 form the Peptidase A1 domain; it reads YYGEIGIGTP…DRHNNRIGFA (316 aa). The active site involves Asp103. A disulfide bridge connects residues Cys116 and Cys123. Residue Asn140 is glycosylated (N-linked (GlcNAc...) asparagine). The cysteines at positions 279 and 283 are disulfide-linked. The active site involves Asp288. A disulfide bridge links Cys322 with Cys359.

The protein belongs to the peptidase A1 family. In terms of assembly, interacts with ATP6AP2.

Its subcellular location is the secreted. It is found in the membrane. The catalysed reaction is Cleavage of Leu-|-Xaa bond in angiotensinogen to generate angiotensin I.. Interaction with ATP6AP2 results in a 5-fold increased efficiency in angiotensinogen processing. Functionally, renin is a highly specific endopeptidase, whose only known function is to generate angiotensin I from angiotensinogen in the plasma, initiating a cascade of reactions that produce an elevation of blood pressure and increased sodium retention by the kidney. In Canis lupus familiaris (Dog), this protein is Renin (REN).